The following is a 634-amino-acid chain: Lamin tail domain-containing protein 2 (634 aa).

Residues 1-44 (MRWLRPAGRRREQESVSGHLGPPAGAPAAPETPTCLPDTTPHPA) form a disordered region. Positions 106-169 (SHSQEKLLQN…QKSCLLQLAR (64 aa)) form a coiled coil. Residues 228–237 (FTNMEPSSKQ) are compositionally biased toward polar residues. 2 disordered regions span residues 228–349 (FTNM…TDPD) and 464–575 (HRIP…PAEA). The span at 276 to 287 (SSSGGADSDSSS) shows a compositional bias: low complexity. Over residues 310 to 321 (SEQALVQAGSYS) the composition is skewed to polar residues. The segment covering 322–337 (RDSEDLQKTHSPRHGE) has biased composition (basic and acidic residues). The LTD domain maps to 350–468 (HWSPELLQSP…EVLSEHRIPR (119 aa)). Basic residues predominate over residues 502-513 (PPRPPRPLRKGR). A compositionally biased stretch (basic and acidic residues) spans 540-550 (HAREGPARPEN).

This is Lamin tail domain-containing protein 2 (LMNTD2) from Homo sapiens (Human).